We begin with the raw amino-acid sequence, 1173 residues long: Tectonin beta-propeller repeat-containing protein 1 (1173 aa).

4 TECPR repeats span residues serine 210–isoleucine 239, aspartate 254–glutamate 285, aspartate 301–valine 332, and asparagine 344–valine 376. The segment covering glycine 413–leucine 430 has biased composition (polar residues). Residues glycine 413–leucine 495 are disordered. The segment covering serine 431–serine 456 has biased composition (low complexity). The span at serine 475–lysine 485 shows a compositional bias: basic and acidic residues. Positions serine 486–leucine 495 are enriched in polar residues. Residues valine 618–cysteine 727 form the PH domain. 5 TECPR repeats span residues histidine 739 to methionine 766, alanine 962 to valine 991, glutamine 1007 to proline 1037, serine 1053 to serine 1083, and aspartate 1095 to isoleucine 1135. The interval asparagine 1147–cysteine 1173 is disordered.

This sequence belongs to the TECPR1 family.

Its subcellular location is the cytoplasmic vesicle. It is found in the autophagosome membrane. It localises to the lysosome membrane. Tethering factor involved in autophagy. Involved in autophagosome maturation by promoting the autophagosome fusion with lysosomes. Binds phosphatidylinositol-3-phosphate (PtdIns(3)P) present at the surface of autophagosomes. This Gallus gallus (Chicken) protein is Tectonin beta-propeller repeat-containing protein 1 (TECPR1).